Here is a 599-residue protein sequence, read N- to C-terminus: Elongation factor 4 (599 aa).

A tr-type G domain is found at 4–186 (KFIRNFSIIA…AIIKHVPPPL (183 aa)). GTP-binding positions include 16-21 (DHGKST) and 133-136 (NKID).

It belongs to the TRAFAC class translation factor GTPase superfamily. Classic translation factor GTPase family. LepA subfamily.

Its subcellular location is the cell membrane. The enzyme catalyses GTP + H2O = GDP + phosphate + H(+). Functionally, required for accurate and efficient protein synthesis under certain stress conditions. May act as a fidelity factor of the translation reaction, by catalyzing a one-codon backward translocation of tRNAs on improperly translocated ribosomes. Back-translocation proceeds from a post-translocation (POST) complex to a pre-translocation (PRE) complex, thus giving elongation factor G a second chance to translocate the tRNAs correctly. Binds to ribosomes in a GTP-dependent manner. In Ureaplasma urealyticum serovar 10 (strain ATCC 33699 / Western), this protein is Elongation factor 4.